Reading from the N-terminus, the 286-residue chain is Mating type protein A-1 (286 aa).

Positions 40 to 95 form a DNA-binding region, alpha box; it reads AAKKKVNGFMSFRSYYSPLFSQLPQKERSPFMTILWQHDPFHNEWNFMCSVYSSIR.

This sequence belongs to the MATALPHA1 family.

Its subcellular location is the nucleus. Its function is as follows. Required for expression of the heterokaryon incompatibility and sexual functions. The protein is Mating type protein A-1 (MTA-1) of Neurospora africana.